We begin with the raw amino-acid sequence, 128 residues long: Saitohin (128 aa).

A disordered region spans residues 77 to 128; the sequence is SYSSEESSRNGAEQGRQLSIEGPFQGQNCPSHPAAALPLPMRGESQATSCQV.

Interacts with PRDX6.

It localises to the cytoplasm. It is found in the nucleus. This Gorilla gorilla gorilla (Western lowland gorilla) protein is Saitohin (STH).